The chain runs to 94 residues: Large ribosomal subunit protein bL28 (94 aa).

Residues 1-21 (MARRCEVTGRGTVSGNNVSHS) form a disordered region. Residues 11–20 (GTVSGNNVSH) show a composition bias toward polar residues.

This sequence belongs to the bacterial ribosomal protein bL28 family.

In Leptospira interrogans serogroup Icterohaemorrhagiae serovar copenhageni (strain Fiocruz L1-130), this protein is Large ribosomal subunit protein bL28.